Reading from the N-terminus, the 133-residue chain is MKKNPSSPAGCPCGKPRAYPDCCGRWHAGALFLQAPDAESLMRSRYSAFVLDQLDYLLQTWHPDTRPSELEPNAADVKWLGLQIKASQQQDDTHATVEFVARLRQAGRATRLHELSRFVKEEQRWYYVDGDIR.

This sequence belongs to the UPF0225 family.

This is UPF0225 protein BP2036 from Bordetella pertussis (strain Tohama I / ATCC BAA-589 / NCTC 13251).